The chain runs to 326 residues: 4-hydroxy-3-methylbut-2-enyl diphosphate reductase 1 (326 aa).

Residue cysteine 27 coordinates [4Fe-4S] cluster. The (2E)-4-hydroxy-3-methylbut-2-enyl diphosphate site is built by histidine 56 and histidine 89. Residues histidine 56 and histidine 89 each contribute to the dimethylallyl diphosphate site. Isopentenyl diphosphate is bound by residues histidine 56 and histidine 89. Residue cysteine 111 participates in [4Fe-4S] cluster binding. Residue histidine 139 coordinates (2E)-4-hydroxy-3-methylbut-2-enyl diphosphate. Dimethylallyl diphosphate is bound at residue histidine 139. Histidine 139 contributes to the isopentenyl diphosphate binding site. Residue glutamate 141 is the Proton donor of the active site. Threonine 179 is a (2E)-4-hydroxy-3-methylbut-2-enyl diphosphate binding site. Residue cysteine 209 participates in [4Fe-4S] cluster binding. Residues serine 237, serine 238, asparagine 239, and serine 281 each contribute to the (2E)-4-hydroxy-3-methylbut-2-enyl diphosphate site. Dimethylallyl diphosphate contacts are provided by serine 237, serine 238, asparagine 239, and serine 281. Positions 237, 238, 239, and 281 each coordinate isopentenyl diphosphate.

The protein belongs to the IspH family. The cofactor is [4Fe-4S] cluster.

It catalyses the reaction isopentenyl diphosphate + 2 oxidized [2Fe-2S]-[ferredoxin] + H2O = (2E)-4-hydroxy-3-methylbut-2-enyl diphosphate + 2 reduced [2Fe-2S]-[ferredoxin] + 2 H(+). The enzyme catalyses dimethylallyl diphosphate + 2 oxidized [2Fe-2S]-[ferredoxin] + H2O = (2E)-4-hydroxy-3-methylbut-2-enyl diphosphate + 2 reduced [2Fe-2S]-[ferredoxin] + 2 H(+). It functions in the pathway isoprenoid biosynthesis; dimethylallyl diphosphate biosynthesis; dimethylallyl diphosphate from (2E)-4-hydroxy-3-methylbutenyl diphosphate: step 1/1. The protein operates within isoprenoid biosynthesis; isopentenyl diphosphate biosynthesis via DXP pathway; isopentenyl diphosphate from 1-deoxy-D-xylulose 5-phosphate: step 6/6. Its function is as follows. Catalyzes the conversion of 1-hydroxy-2-methyl-2-(E)-butenyl 4-diphosphate (HMBPP) into a mixture of isopentenyl diphosphate (IPP) and dimethylallyl diphosphate (DMAPP). Acts in the terminal step of the DOXP/MEP pathway for isoprenoid precursor biosynthesis. The polypeptide is 4-hydroxy-3-methylbut-2-enyl diphosphate reductase 1 (Burkholderia pseudomallei (strain K96243)).